A 244-amino-acid chain; its full sequence is Troponin I, cardiac muscle (244 aa).

Residues 1–25 (MSDEEEVTYEEEEEEYVEEEEEEVV) show a composition bias toward acidic residues. Positions 1-67 (MSDEEEVTYE…PQVKRKPKIS (67 aa)) are disordered. An N-acetylserine modification is found at Ser-2. A Phosphoserine; by CK2 modification is found at Ser-2. Residues 27–42 (PEPPKPAPPPAAPPPL) are compositionally biased toward pro residues.

The protein belongs to the troponin I family. In terms of assembly, binds to actin and tropomyosin. As to expression, heart.

Troponin I is the inhibitory subunit of troponin, the thin filament regulatory complex which confers calcium-sensitivity to striated muscle actomyosin ATPase activity. This chain is Troponin I, cardiac muscle (tnni3), found in Xenopus laevis (African clawed frog).